A 104-amino-acid chain; its full sequence is Large ribosomal subunit protein bL21 (104 aa).

Belongs to the bacterial ribosomal protein bL21 family. In terms of assembly, part of the 50S ribosomal subunit. Contacts protein L20.

Functionally, this protein binds to 23S rRNA in the presence of protein L20. The sequence is that of Large ribosomal subunit protein bL21 from Nitrosococcus oceani (strain ATCC 19707 / BCRC 17464 / JCM 30415 / NCIMB 11848 / C-107).